A 365-amino-acid polypeptide reads, in one-letter code: Aminotransferase poxL (365 aa).

Arginine 92 serves as a coordination point for pyridoxal 5'-phosphate. Residue lysine 193 is modified to N6-(pyridoxal phosphate)lysine. Glutamate 229 provides a ligand contact to pyridoxal 5'-phosphate.

Belongs to the class-IV pyridoxal-phosphate-dependent aminotransferase family. Pyridoxal 5'-phosphate serves as cofactor.

It participates in secondary metabolite biosynthesis. Its function is as follows. Aminotransferase; part of the gene cluster that mediates the biosynthesis of oxaleimides, cytotoxic compounds containing an unusual disubstituted succinimide moiety. The first step of the pathway is provided by the HR-PKS poxF that serves in a new mode of collaborative biosynthesis with the PKS-NRPS poxE, by providing the olefin containing amino acid substrate via the synthesis of an ACP-bound dec-4-enoate. The cytochrome P450 monooxygenase poxM-catalyzed oxidation at the alpha-position creates the enzyme-bound 2-hydroxydec-4-enoyl-ACP thioester, which may be prone to spontaneous hydrolysis to yield 2-hydroxydec-4-enoic acid due to increased electrophilicity of the carbonyl. 2-hydroxydec-4-enoic acid can then be further oxidized by poxM to yield the alpha-ketoacid 2-oxodec-4-enoicacid, which is reductively aminated by the aminotransferase poxL to yield (S,E)-2-aminodec-4-enoic acid. The Hybrid PKS-NRPS synthetase poxE then performs condensation between the octaketide product of its PKS modules and the amino group of (S,E)-2-aminodec-4-enoic acid which is activated and incorporated by the adenylation domain. The resulting aminoacyl product can be cyclized by the Diels-Alderase PoxQ and reductively released by the reductive (R) domain of poxE to yield an aldehyde intermediate. The released aldehyde is then substrate for a Knoevenagel condensation by the hydrolyase poxO followed by an oxidation at the 5-position of the pyrrolidone ring. The presence of the olefin from the amino acid building block allows for migration of the substituted allyl group to occur. This allylic transposition reaction takes place in a conjugate addition, semipinacol-like fashion to yield a succinimide intermediate. Iterative two-electron oxidations of the C7 methyl of the succinimide intermediate to the carboxylic acid can be catalyzed by one of two remaining cytochrome P450 monooxygenasess poxC or poxD to yield oxaleimide A. Subsequent oxidation yields the maleimide scaffold oxaleimide I. Both oxaleimide A and oxaleimide I can undergo oxidative modifications in the decalin ring to yield the series of products oxaleimides B to H. This chain is Aminotransferase poxL, found in Penicillium oxalicum.